Reading from the N-terminus, the 729-residue chain is Dipeptidyl peptidase 3 (729 aa).

Zn(2+) is bound at residue His-459. Residue Glu-460 is part of the active site. Zn(2+) is bound by residues His-464 and Glu-517.

It belongs to the peptidase M49 family. Requires Zn(2+) as cofactor.

Its subcellular location is the cytoplasm. It catalyses the reaction Release of an N-terminal dipeptide from a peptide comprising four or more residues, with broad specificity. Also acts on dipeptidyl 2-naphthylamides.. In Nematostella vectensis (Starlet sea anemone), this protein is Dipeptidyl peptidase 3 (dpp3).